The primary structure comprises 208 residues: Small ribosomal subunit protein uS4 (208 aa).

The S4 RNA-binding domain occupies 98–161; sequence RRLDNVVYRL…RKSKRFKEVF (64 aa).

This sequence belongs to the universal ribosomal protein uS4 family. Part of the 30S ribosomal subunit. Contacts protein S5. The interaction surface between S4 and S5 is involved in control of translational fidelity.

Functionally, one of the primary rRNA binding proteins, it binds directly to 16S rRNA where it nucleates assembly of the body of the 30S subunit. Its function is as follows. With S5 and S12 plays an important role in translational accuracy. The polypeptide is Small ribosomal subunit protein uS4 (Halothermothrix orenii (strain H 168 / OCM 544 / DSM 9562)).